Here is a 482-residue protein sequence, read N- to C-terminus: Bile acid receptor (482 aa).

A Glycyl lysine isopeptide (Lys-Gly) (interchain with G-Cter in SUMO1) cross-link involves residue Lys-132. Residues 134–209 (DELCVVCGDR…MGMLAECLLT (76 aa)) constitute a DNA-binding region (nuclear receptor). The segment at 137–157 (CVVCGDRASGYHYNALTCEGC) adopts an NR C4-type zinc-finger fold. Residues Ser-145 and Ser-164 each carry the phosphoserine; by PKC/PRKCA modification. N6-acetyllysine; by EP300 is present on Lys-167. The NR C4-type zinc-finger motif lies at 173 to 197 (CKNGGNCVMDMYMRRKCQECRLRKC). An N6-methyllysine; by SETD7 modification is found at Lys-216. Lys-223 carries the N6-acetyllysine; by EP300 modification. The segment covering 229-240 (AIHEDSEGRDLR) has biased composition (basic and acidic residues). Residues 229 to 253 (AIHEDSEGRDLRQVTSTTKSCREKT) are disordered. In terms of domain architecture, NR LBD spans 258-482 (DQQNLLHYIM…PLLCEIWDVQ (225 aa)). Lys-285 is covalently cross-linked (Glycyl lysine isopeptide (Lys-Gly) (interchain with G-Cter in SUMO1)). Positions 341, 371, and 379 each coordinate chenodeoxycholate. The residue at position 452 (Thr-452) is a Phosphothreonine; by PKC/PRKCZ. His-457 contacts chenodeoxycholate.

This sequence belongs to the nuclear hormone receptor family. NR1 subfamily. In terms of assembly, heterodimer with RXRA; the heterodimerization enhances the binding affinity for LXXLL motifs from coactivators. Binds DNA predominantly as a heterodimer with RXRA. After activation by agonist binding interacts with coactivators. Interacts with NCOA1, NCOA2, PPARGC1A, CARM1, SETD7, PRMT1, GPS2, SMARCA4 and MED1, EP300 and SMARCD1. Interacts with XRCC5 and XRCC6; decreasing NR1H4/FXR transactivation activity towards ABCB11/BSEP. Interacts with PAGR1 AND NCOA6; indicative for an association with an MLL2/MLL3 complex (ASCOM). Acetylated by EP300. Lys-223 as is the major acetylation site for EP300; the dynamicly regulated acetylation inhibits heterodimerization with RXRA and transactivation activity. Deacetylated by SIRT1. In terms of processing, methylation may increase transactivation of target genes. Post-translationally, phosphorylation by PKC/PRKCA increases transactivation activity by promoting association with PPARGC1A. Sumoylated upon ligand binding.

The protein resides in the nucleus. Ligand-activated transcription factor. Receptor for bile acids (BAs) such as chenodeoxycholic acid (CDCA), lithocholic acid, deoxycholic acid (DCA) and allocholic acid (ACA). Plays a essential role in BA homeostasis through the regulation of genes involved in BA synthesis, conjugation and enterohepatic circulation. Also regulates lipid and glucose homeostasis and is involved innate immune response. The FXR-RXR heterodimer binds predominantly to farnesoid X receptor response elements (FXREs) containing two inverted repeats of the consensus sequence 5'-AGGTCA-3' in which the monomers are spaced by 1 nucleotide (IR-1) but also to tandem repeat DR1 sites with lower affinity, and can be activated by either FXR or RXR-specific ligands. It is proposed that monomeric nuclear receptors such as NR5A2/LRH-1 bound to coregulatory nuclear responsive element (NRE) halfsites located in close proximity to FXREs modulate transcriptional activity. In the liver activates transcription of the corepressor NR0B2 thereby indirectly inhibiting CYP7A1 and CYP8B1 (involved in BA synthesis) implicating at least in part histone demethylase KDM1A resulting in epigenomic repression, and SLC10A1/NTCP (involved in hepatic uptake of conjugated BAs). Activates transcription of the repressor MAFG (involved in regulation of BA synthesis). Activates transcription of SLC27A5/BACS and BAAT (involved in BA conjugation), ABCB11/BSEP (involved in bile salt export) by directly recruiting histone methyltransferase CARM1, and ABCC2/MRP2 (involved in secretion of conjugated BAs) and ABCB4 (involved in secretion of phosphatidylcholine in the small intestine). Activates transcription of SLC27A5/BACS and BAAT (involved in BA conjugation), ABCB11/BSEP (involved in bile salt export) by directly recruiting histone methyltransferase CARM1, and ABCC2/MRP2 (involved in secretion of conjugated BAs) and ABCB4 (involved in secretion of phosphatidylcholine in the small intestine). In the intestine activates FGF19 expression and secretion leading to hepatic CYP7A1 repression. The function also involves the coordinated induction of hepatic KLB/beta-klotho expression. Regulates transcription of liver UGT2B4 and SULT2A1 involved in BA detoxification; binding to the UGT2B4 promoter seems to imply a monomeric transactivation independent of RXRA. Modulates lipid homeostasis by activating liver NR0B2/SHP-mediated repression of SREBF1 (involved in de novo lipogenesis), expression of PLTP (involved in HDL formation), SCARB1 (involved in HDL hepatic uptake), APOE, APOC1, APOC4, PPARA (involved in beta-oxidation of fatty acids), VLDLR and SDC1 (involved in the hepatic uptake of LDL and IDL remnants), and inhibiting expression of MTTP (involved in VLDL assembly). Increases expression of APOC2 (promoting lipoprotein lipase activity implicated in triglyceride clearance). Transrepresses APOA1 involving a monomeric competition with NR2A1 for binding to a DR1 element. Also reduces triglyceride clearance by inhibiting expression of ANGPTL3 and APOC3 (both involved in inhibition of lipoprotein lipase). Involved in glucose homeostasis by modulating hepatic gluconeogenesis through activation of NR0B2/SHP-mediated repression of respective genes. Modulates glycogen synthesis (inducing phosphorylation of glycogen synthase kinase-3). Modulates glucose-stimulated insulin secretion and is involved in insulin resistance. Involved in intestinal innate immunity. Plays a role in protecting the distal small intestine against bacterial overgrowth and preservation of the epithelial barrier. Down-regulates inflammatory cytokine expression in several types of immune cells including macrophages and mononuclear cells. Mediates trans-repression of TLR4-induced cytokine expression; the function seems to require its sumoylation and prevents N-CoR nuclear receptor corepressor clearance from target genes such as IL1B and NOS2. Involved in the TLR9-mediated protective mechanism in intestinal inflammation. Plays an anti-inflammatory role in liver inflammation; proposed to inhibit pro-inflammatory (but not antiapoptotic) NF-kappa-B signaling. The chain is Bile acid receptor (NR1H4) from Bos taurus (Bovine).